The primary structure comprises 199 residues: ATP-dependent Clp protease proteolytic subunit 2 (199 aa).

Ser-95 acts as the Nucleophile in catalysis. His-120 is an active-site residue.

The protein belongs to the peptidase S14 family. As to quaternary structure, fourteen ClpP subunits assemble into 2 heptameric rings which stack back to back to give a disk-like structure with a central cavity, resembling the structure of eukaryotic proteasomes.

It localises to the cytoplasm. The catalysed reaction is Hydrolysis of proteins to small peptides in the presence of ATP and magnesium. alpha-casein is the usual test substrate. In the absence of ATP, only oligopeptides shorter than five residues are hydrolyzed (such as succinyl-Leu-Tyr-|-NHMec, and Leu-Tyr-Leu-|-Tyr-Trp, in which cleavage of the -Tyr-|-Leu- and -Tyr-|-Trp bonds also occurs).. In terms of biological role, cleaves peptides in various proteins in a process that requires ATP hydrolysis. Has a chymotrypsin-like activity. Plays a major role in the degradation of misfolded proteins. The protein is ATP-dependent Clp protease proteolytic subunit 2 of Mycolicibacterium paratuberculosis (strain ATCC BAA-968 / K-10) (Mycobacterium paratuberculosis).